Here is a 69-residue protein sequence, read N- to C-terminus: uncharacterized protein (69 aa).

This is an uncharacterized protein from Vaccinia virus (strain Copenhagen) (VACV).